The sequence spans 263 residues: 4-hydroxy-tetrahydrodipicolinate reductase (263 aa).

Residues 7-12 (GFKGRM), 96-98 (GTT), and 122-125 (APNF) contribute to the NAD(+) site. Histidine 152 serves as the catalytic Proton donor/acceptor. Histidine 153 is a (S)-2,3,4,5-tetrahydrodipicolinate binding site. Catalysis depends on lysine 156, which acts as the Proton donor. 162–163 (GT) serves as a coordination point for (S)-2,3,4,5-tetrahydrodipicolinate.

Belongs to the DapB family.

Its subcellular location is the cytoplasm. The catalysed reaction is (S)-2,3,4,5-tetrahydrodipicolinate + NAD(+) + H2O = (2S,4S)-4-hydroxy-2,3,4,5-tetrahydrodipicolinate + NADH + H(+). The enzyme catalyses (S)-2,3,4,5-tetrahydrodipicolinate + NADP(+) + H2O = (2S,4S)-4-hydroxy-2,3,4,5-tetrahydrodipicolinate + NADPH + H(+). It participates in amino-acid biosynthesis; L-lysine biosynthesis via DAP pathway; (S)-tetrahydrodipicolinate from L-aspartate: step 4/4. In terms of biological role, catalyzes the conversion of 4-hydroxy-tetrahydrodipicolinate (HTPA) to tetrahydrodipicolinate. The protein is 4-hydroxy-tetrahydrodipicolinate reductase of Listeria monocytogenes serovar 1/2a (strain ATCC BAA-679 / EGD-e).